The following is a 342-amino-acid chain: Heat-inducible transcription repressor HrcA (342 aa).

This sequence belongs to the HrcA family.

Negative regulator of class I heat shock genes (grpE-dnaK-dnaJ and groELS operons). Prevents heat-shock induction of these operons. The chain is Heat-inducible transcription repressor HrcA from Acholeplasma laidlawii.